Consider the following 274-residue polypeptide: MNSKNHHQKKRFGQHWLVNKKILEKIKEIAVLNQNDFILEIGPGKGALTSKLLDSEIKKLHAIELDKDLINLLNDKFNNNDKFSLQQGDILTVNLDSINKKITKVIANIPYNITGPILDIFIGRLGITRNYNYEKIIFLMQKDVVDRILSKEGSPNAGALSVRMQLLSKIKKICDVPPSSFSPPPKVFSSLVVFEPIKNHLRLDISIEKNIDKLLRISFNSRRKMLRNTLNSILSNEEINELSESSKVCFNLRPQDISIEQWIKLAENCIKIKK.

S-adenosyl-L-methionine is bound by residues histidine 15, leucine 17, glycine 42, glutamate 64, aspartate 89, and asparagine 108.

This sequence belongs to the class I-like SAM-binding methyltransferase superfamily. rRNA adenine N(6)-methyltransferase family. RsmA subfamily.

The protein resides in the cytoplasm. The catalysed reaction is adenosine(1518)/adenosine(1519) in 16S rRNA + 4 S-adenosyl-L-methionine = N(6)-dimethyladenosine(1518)/N(6)-dimethyladenosine(1519) in 16S rRNA + 4 S-adenosyl-L-homocysteine + 4 H(+). In terms of biological role, specifically dimethylates two adjacent adenosines (A1518 and A1519) in the loop of a conserved hairpin near the 3'-end of 16S rRNA in the 30S particle. May play a critical role in biogenesis of 30S subunits. This is Ribosomal RNA small subunit methyltransferase A from Prochlorococcus marinus (strain AS9601).